Here is a 356-residue protein sequence, read N- to C-terminus: Probable L-asparaginase 4 (356 aa).

Positions 1–22 (MWGFIVTCGIFLVLLCQLRLLS) are cleaved as a signal peptide. An Asparaginase/glutaminase domain is found at 36–356 (PNVTVFAMGG…RDIEGLFSIK (321 aa)). N-linked (GlcNAc...) asparagine glycosylation is present at asparagine 37. Threonine 46 (O-isoaspartyl threonine intermediate) is an active-site residue. Asparagine 52 is a glycosylation site (N-linked (GlcNAc...) asparagine). Residues serine 93 and 126–127 (TD) contribute to the substrate site. Asparagine 176 carries an N-linked (GlcNAc...) asparagine glycan.

It belongs to the asparaginase 1 family.

It is found in the secreted. The protein resides in the cell wall. It carries out the reaction L-asparagine + H2O = L-aspartate + NH4(+). The chain is Probable L-asparaginase 4 from Schizosaccharomyces pombe (strain 972 / ATCC 24843) (Fission yeast).